Here is a 459-residue protein sequence, read N- to C-terminus: Elongation factor 1-alpha 2 (459 aa).

Positions 5-242 (KTHINIVVIG…DCIIPPQRPT (238 aa)) constitute a tr-type G domain. The tract at residues 14–21 (GHVDSGKS) is G1. Residues 70 to 74 (GITID) are G2. Positions 91-94 (DAPG) are G3. Residues 153–156 (NKMD) form a G4 region. The G5 stretch occupies residues 194-196 (SGF). A 5-glutamyl glycerylphosphorylethanolamine mark is found at glutamate 301 and glutamate 374.

It belongs to the TRAFAC class translation factor GTPase superfamily. Classic translation factor GTPase family. EF-Tu/EF-1A subfamily.

The protein resides in the cytoplasm. Its function is as follows. This protein promotes the GTP-dependent binding of aminoacyl-tRNA to the A-site of ribosomes during protein biosynthesis. This is Elongation factor 1-alpha 2 (eft-2) from Oscheius tipulae.